Reading from the N-terminus, the 196-residue chain is ATP-dependent Clp protease proteolytic subunit (196 aa).

Residue S101 is the Nucleophile of the active site. The active site involves H126.

This sequence belongs to the peptidase S14 family. In terms of assembly, component of the chloroplastic Clp protease core complex.

The protein localises to the plastid. The protein resides in the chloroplast stroma. The enzyme catalyses Hydrolysis of proteins to small peptides in the presence of ATP and magnesium. alpha-casein is the usual test substrate. In the absence of ATP, only oligopeptides shorter than five residues are hydrolyzed (such as succinyl-Leu-Tyr-|-NHMec, and Leu-Tyr-Leu-|-Tyr-Trp, in which cleavage of the -Tyr-|-Leu- and -Tyr-|-Trp bonds also occurs).. Functionally, cleaves peptides in various proteins in a process that requires ATP hydrolysis. Has a chymotrypsin-like activity. Plays a major role in the degradation of misfolded proteins. The sequence is that of ATP-dependent Clp protease proteolytic subunit from Coffea arabica (Arabian coffee).